Consider the following 661-residue polypeptide: Threonine--tRNA ligase (661 aa).

Residues 1–64 (MSQAISLTFP…TTGRIEIITR (64 aa)) form the TGS domain. The catalytic stretch occupies residues 245–546 (DHRRLGREMD…LIENFAGHMP (302 aa)). The Zn(2+) site is built by C341, H392, and H523.

Belongs to the class-II aminoacyl-tRNA synthetase family. Homodimer. Requires Zn(2+) as cofactor.

It is found in the cytoplasm. The catalysed reaction is tRNA(Thr) + L-threonine + ATP = L-threonyl-tRNA(Thr) + AMP + diphosphate + H(+). Catalyzes the attachment of threonine to tRNA(Thr) in a two-step reaction: L-threonine is first activated by ATP to form Thr-AMP and then transferred to the acceptor end of tRNA(Thr). Also edits incorrectly charged L-seryl-tRNA(Thr). The chain is Threonine--tRNA ligase from Rhizobium johnstonii (strain DSM 114642 / LMG 32736 / 3841) (Rhizobium leguminosarum bv. viciae).